The primary structure comprises 42 residues: Delta-hexatoxin-Hv1b (42 aa).

4 disulfides stabilise this stretch: Cys1–Cys15, Cys8–Cys20, Cys14–Cys31, and Cys16–Cys42.

It belongs to the neurotoxin 06 (delta-actx) family. Expressed by the venom gland.

The protein resides in the secreted. Functionally, lethal neurotoxin. Slows the inactivation of tetrodotoxin-sensitive voltage-gated sodium channels (Nav) by binding to site 3 of the channel, resulting in repetitive firing in autonomic and motor nerve fibers. The polypeptide is Delta-hexatoxin-Hv1b (Hadronyche versuta (Blue mountains funnel-web spider)).